We begin with the raw amino-acid sequence, 226 residues long: Histone H1.5 (226 aa).

Positions 1–16 (MSETAPAETATPAPVE) are enriched in low complexity. A disordered region spans residues 1–44 (MSETAPAETATPAPVEKSPAKKKATKKAAGAGAAKRKATGPPVS). Position 2 is an N-acetylserine; partial (S2). At S2 the chain carries Phosphoserine. T11 carries the phosphothreonine; by GSK3 modification. K17 carries the N6-acetyllysine modification. The residue at position 18 (S18) is a Phosphoserine. K27 carries the post-translational modification N6-methyllysine. K37 bears the N6-(beta-hydroxybutyryl)lysine; alternate mark. K37 is subject to N6-succinyllysine; alternate. A Phosphothreonine modification is found at T39. One can recognise an H15 domain in the interval 39–112 (TGPPVSELIT…GASGSFKLNK (74 aa)). An N6-acetyllysine modification is found at K49. K55 bears the N6-(beta-hydroxybutyryl)lysine mark. At R57 the chain carries Citrulline. N6-(beta-hydroxybutyryl)lysine is present on K67. K78 is modified (N6-acetyllysine). K88, K93, and K109 each carry N6-(beta-hydroxybutyryl)lysine. The interval 98-226 (QTKGTGASGS…KAKKAAAKKK (129 aa)) is disordered. Over residues 122-133 (KAKKAGAAKAKK) the composition is skewed to basic residues. 2 positions are modified to phosphothreonine: T138 and T155. The span at 140-161 (KKAKKAAGAKKAVKKTPKKAKK) shows a compositional bias: basic residues. K168 is subject to N6-acetyllysine. Residues 169-187 (KVAKSPKKAKAAAKPKKAT) are compositionally biased toward basic residues. A phosphoserine mark is found at S173 and S189. Basic residues predominate over residues 194–226 (KAVKPKAAKPKAAKPKAAKPKAAKAKKAAAKKK).

Belongs to the histone H1/H5 family. In terms of assembly, interacts with MSX1. Post-translationally, H1 histones are progressively phosphorylated during the cell cycle, becoming maximally phosphorylated during late G2 phase and M phase, and being dephosphorylated sharply thereafter. Phosphorylated at Thr-11 by GSK3B during mitosis in prometaphase and dephosphorylated in telophase. Citrullination at Arg-57 (H1R54ci) by PADI4 takes place within the DNA-binding site of H1 and results in its displacement from chromatin and global chromatin decondensation, thereby promoting pluripotency and stem cell maintenance. In terms of tissue distribution, ubiquitous. Expressed in the majority of the cell lines tested and in testis.

The protein localises to the nucleus. Its subcellular location is the chromosome. Its function is as follows. Histone H1 protein binds to linker DNA between nucleosomes forming the macromolecular structure known as the chromatin fiber. Histones H1 are necessary for the condensation of nucleosome chains into higher-order structured fibers. Also acts as a regulator of individual gene transcription through chromatin remodeling, nucleosome spacing and DNA methylation. The protein is Histone H1.5 of Homo sapiens (Human).